A 350-amino-acid chain; its full sequence is Ubiquitin carboxyl-terminal hydrolase 11 (350 aa).

One can recognise a USP domain in the interval 49 to 344 (KGLYNVSGND…SACLLFYEME (296 aa)). Catalysis depends on Cys-59, which acts as the Nucleophile. The active-site Proton acceptor is the His-302.

It belongs to the peptidase C19 family.

The enzyme catalyses Thiol-dependent hydrolysis of ester, thioester, amide, peptide and isopeptide bonds formed by the C-terminal Gly of ubiquitin (a 76-residue protein attached to proteins as an intracellular targeting signal).. The polypeptide is Ubiquitin carboxyl-terminal hydrolase 11 (ubp11) (Schizosaccharomyces pombe (strain 972 / ATCC 24843) (Fission yeast)).